A 360-amino-acid chain; its full sequence is Phospho-N-acetylmuramoyl-pentapeptide-transferase (360 aa).

Transmembrane regions (helical) follow at residues 27–47, 73–93, 97–117, 145–165, 168–188, 199–219, 236–256, 263–283, 288–308, and 337–357; these read ILGV…VIVL, TMGG…WGDL, YVWV…VDDY, AFYL…VPLF, VAIP…VGTS, GLAI…AYLT, SGEL…FLWF, IFMG…IAVI, LVLF…ILQV, and KVIV…FATL.

Belongs to the glycosyltransferase 4 family. MraY subfamily. Mg(2+) is required as a cofactor.

Its subcellular location is the cell inner membrane. The catalysed reaction is UDP-N-acetyl-alpha-D-muramoyl-L-alanyl-gamma-D-glutamyl-meso-2,6-diaminopimeloyl-D-alanyl-D-alanine + di-trans,octa-cis-undecaprenyl phosphate = di-trans,octa-cis-undecaprenyl diphospho-N-acetyl-alpha-D-muramoyl-L-alanyl-D-glutamyl-meso-2,6-diaminopimeloyl-D-alanyl-D-alanine + UMP. It functions in the pathway cell wall biogenesis; peptidoglycan biosynthesis. Catalyzes the initial step of the lipid cycle reactions in the biosynthesis of the cell wall peptidoglycan: transfers peptidoglycan precursor phospho-MurNAc-pentapeptide from UDP-MurNAc-pentapeptide onto the lipid carrier undecaprenyl phosphate, yielding undecaprenyl-pyrophosphoryl-MurNAc-pentapeptide, known as lipid I. This Marinomonas sp. (strain MWYL1) protein is Phospho-N-acetylmuramoyl-pentapeptide-transferase.